The following is a 458-amino-acid chain: Serine--tRNA ligase (458 aa).

252–254 (TAE) lines the L-serine pocket. ATP is bound by residues 283–285 (RKE) and Val299. Glu306 provides a ligand contact to L-serine. ATP is bound at residue 370–373 (EMVS). Thr405 contributes to the L-serine binding site.

It belongs to the class-II aminoacyl-tRNA synthetase family. Type-1 seryl-tRNA synthetase subfamily. Homodimer. The tRNA molecule binds across the dimer.

It is found in the cytoplasm. It carries out the reaction tRNA(Ser) + L-serine + ATP = L-seryl-tRNA(Ser) + AMP + diphosphate + H(+). It catalyses the reaction tRNA(Sec) + L-serine + ATP = L-seryl-tRNA(Sec) + AMP + diphosphate + H(+). It participates in aminoacyl-tRNA biosynthesis; selenocysteinyl-tRNA(Sec) biosynthesis; L-seryl-tRNA(Sec) from L-serine and tRNA(Sec): step 1/1. In terms of biological role, catalyzes the attachment of serine to tRNA(Ser). Is also able to aminoacylate tRNA(Sec) with serine, to form the misacylated tRNA L-seryl-tRNA(Sec), which will be further converted into selenocysteinyl-tRNA(Sec). The polypeptide is Serine--tRNA ligase (Sulfolobus acidocaldarius (strain ATCC 33909 / DSM 639 / JCM 8929 / NBRC 15157 / NCIMB 11770)).